The chain runs to 447 residues: Cysteine--tRNA ligase (447 aa).

Position 28 (Cys-28) interacts with Zn(2+). A 'HIGH' region motif is present at residues 30 to 40 (PTVYNYIHVGN). Positions 211, 236, and 240 each coordinate Zn(2+). The short motif at 268 to 272 (KMSKS) is the 'KMSKS' region element. Lys-271 serves as a coordination point for ATP.

It belongs to the class-I aminoacyl-tRNA synthetase family. As to quaternary structure, monomer. Requires Zn(2+) as cofactor.

It is found in the cytoplasm. It catalyses the reaction tRNA(Cys) + L-cysteine + ATP = L-cysteinyl-tRNA(Cys) + AMP + diphosphate. The sequence is that of Cysteine--tRNA ligase from Streptococcus mutans serotype c (strain ATCC 700610 / UA159).